Reading from the N-terminus, the 98-residue chain is NADH-ubiquinone oxidoreductase chain 4L (98 aa).

Transmembrane regions (helical) follow at residues 1–21 (MSMV…GMLV), 29–49 (SLLC…VTIL), and 61–81 (IVLL…LVMV).

The protein belongs to the complex I subunit 4L family. In terms of assembly, core subunit of respiratory chain NADH dehydrogenase (Complex I) which is composed of 45 different subunits.

It localises to the mitochondrion inner membrane. It catalyses the reaction a ubiquinone + NADH + 5 H(+)(in) = a ubiquinol + NAD(+) + 4 H(+)(out). In terms of biological role, core subunit of the mitochondrial membrane respiratory chain NADH dehydrogenase (Complex I) which catalyzes electron transfer from NADH through the respiratory chain, using ubiquinone as an electron acceptor. Part of the enzyme membrane arm which is embedded in the lipid bilayer and involved in proton translocation. The chain is NADH-ubiquinone oxidoreductase chain 4L (MT-ND4L) from Vulpes vulpes (Red fox).